We begin with the raw amino-acid sequence, 372 residues long: UDP-N-acetylglucosamine--N-acetylmuramyl-(pentapeptide) pyrophosphoryl-undecaprenol N-acetylglucosamine transferase (372 aa).

UDP-N-acetyl-alpha-D-glucosamine contacts are provided by residues 16–18 (TGG), asparagine 128, arginine 164, serine 192, isoleucine 250, and glutamine 295.

The protein belongs to the glycosyltransferase 28 family. MurG subfamily.

The protein resides in the cell inner membrane. The catalysed reaction is di-trans,octa-cis-undecaprenyl diphospho-N-acetyl-alpha-D-muramoyl-L-alanyl-D-glutamyl-meso-2,6-diaminopimeloyl-D-alanyl-D-alanine + UDP-N-acetyl-alpha-D-glucosamine = di-trans,octa-cis-undecaprenyl diphospho-[N-acetyl-alpha-D-glucosaminyl-(1-&gt;4)]-N-acetyl-alpha-D-muramoyl-L-alanyl-D-glutamyl-meso-2,6-diaminopimeloyl-D-alanyl-D-alanine + UDP + H(+). It participates in cell wall biogenesis; peptidoglycan biosynthesis. Cell wall formation. Catalyzes the transfer of a GlcNAc subunit on undecaprenyl-pyrophosphoryl-MurNAc-pentapeptide (lipid intermediate I) to form undecaprenyl-pyrophosphoryl-MurNAc-(pentapeptide)GlcNAc (lipid intermediate II). This chain is UDP-N-acetylglucosamine--N-acetylmuramyl-(pentapeptide) pyrophosphoryl-undecaprenol N-acetylglucosamine transferase, found in Paraburkholderia xenovorans (strain LB400).